The chain runs to 296 residues: Bifunctional protein FolD (296 aa).

NADP(+)-binding positions include 170–172 and Ser195; that span reads GRS.

It belongs to the tetrahydrofolate dehydrogenase/cyclohydrolase family. Homodimer.

It carries out the reaction (6R)-5,10-methylene-5,6,7,8-tetrahydrofolate + NADP(+) = (6R)-5,10-methenyltetrahydrofolate + NADPH. The catalysed reaction is (6R)-5,10-methenyltetrahydrofolate + H2O = (6R)-10-formyltetrahydrofolate + H(+). It participates in one-carbon metabolism; tetrahydrofolate interconversion. Catalyzes the oxidation of 5,10-methylenetetrahydrofolate to 5,10-methenyltetrahydrofolate and then the hydrolysis of 5,10-methenyltetrahydrofolate to 10-formyltetrahydrofolate. This chain is Bifunctional protein FolD, found in Rhodospirillum rubrum (strain ATCC 11170 / ATH 1.1.1 / DSM 467 / LMG 4362 / NCIMB 8255 / S1).